The following is a 109-amino-acid chain: uncharacterized protein (109 aa).

Residues 78–98 (YTCIMYIGLLCMFVLLYMTVI) form a helical membrane-spanning segment.

Its subcellular location is the membrane. This is an uncharacterized protein from Saccharomyces cerevisiae (strain ATCC 204508 / S288c) (Baker's yeast).